A 268-amino-acid polypeptide reads, in one-letter code: 14-3-3-like protein GF14 upsilon (268 aa).

Phosphoserine is present on residues S69 and S192. A Phosphothreonine modification is found at T213. The segment at 243–268 (EAGDDIKEAPKEVQKVDEQAQPPPSQ) is disordered. Residues 246 to 260 (DDIKEAPKEVQKVDE) show a composition bias toward basic and acidic residues. A Phosphoserine modification is found at S267.

This sequence belongs to the 14-3-3 family. In terms of assembly, interacts with EDE1. Interacts with DREB1A and DREB1B in the nucleus. Interacts with CINV1.

The protein resides in the cytoplasm. It is found in the nucleus. Is associated with a DNA binding complex that binds to the G box, a well-characterized cis-acting DNA regulatory element found in plant genes. May be involved in cell cycle regulation by binding to soluble EDE1 and sequestering it in an inactive form during the early stages of mitosis. The polypeptide is 14-3-3-like protein GF14 upsilon (GRF5) (Arabidopsis thaliana (Mouse-ear cress)).